The following is a 116-amino-acid chain: UPF0127 protein PF1050 (116 aa).

Belongs to the UPF0127 family.

In Pyrococcus furiosus (strain ATCC 43587 / DSM 3638 / JCM 8422 / Vc1), this protein is UPF0127 protein PF1050.